Reading from the N-terminus, the 540-residue chain is Membrane protein insertase YidC (540 aa).

A helical transmembrane segment spans residues 6-26 (NILLIALALVSFLLFQQWQVA). The interval 36-63 (QAQSSSTLPAPSFADELDPVPGQQQASA) is disordered. Transmembrane regions (helical) follow at residues 342 to 362 (AFIQ…TFIV), 417 to 437 (LGGC…YWAL), 455 to 475 (LSAQ…MFLI), and 496 to 516 (PVMF…YWLV).

The protein belongs to the OXA1/ALB3/YidC family. Type 1 subfamily. In terms of assembly, interacts with the Sec translocase complex via SecD. Specifically interacts with transmembrane segments of nascent integral membrane proteins during membrane integration.

Its subcellular location is the cell inner membrane. In terms of biological role, required for the insertion and/or proper folding and/or complex formation of integral membrane proteins into the membrane. Involved in integration of membrane proteins that insert both dependently and independently of the Sec translocase complex, as well as at least some lipoproteins. Aids folding of multispanning membrane proteins. This Vibrio campbellii (strain ATCC BAA-1116) protein is Membrane protein insertase YidC.